The sequence spans 512 residues: SNF1-related protein kinase catalytic subunit alpha KIN10 (512 aa).

Residues tyrosine 19–phenylalanine 271 enclose the Protein kinase domain. Lysine 20 participates in a covalent cross-link: Glycyl lysine isopeptide (Lys-Gly) (interchain with G-Cter in ubiquitin). Leucine 25–valine 33 serves as a coordination point for ATP. Lysine 34 is covalently cross-linked (Glycyl lysine isopeptide (Lys-Gly) (interchain with G-Cter in SUMO)). Lysine 48 lines the ATP pocket. Lysine 63 is covalently cross-linked (Glycyl lysine isopeptide (Lys-Gly) (interchain with G-Cter in SUMO)). Aspartate 142 (proton acceptor) is an active-site residue. Serine 164 is modified (phosphoserine). A Phosphothreonine; by GRIK1 or GRIK2 modification is found at threonine 175. Residues alanine 290–arginine 389 are auto-inhibitory domain (AID). Residues lysine 292–aspartate 332 form the UBA domain. The segment at aspartate 294–leucine 512 is regulatory domain (RD). Position 364 is a phosphoserine (serine 364). Residue lysine 390 forms a Glycyl lysine isopeptide (Lys-Gly) (interchain with G-Cter in SUMO) linkage. Residues lysine 390–leucine 512 are PPI. One can recognise a KA1 domain in the interval alanine 463–valine 511.

It belongs to the protein kinase superfamily. CAMK Ser/Thr protein kinase family. SNF1 subfamily. In terms of assembly, subunit of a probable heterotrimeric complex consisting of an alpha catalytic (KIN10 or KIN11) subunit, and a beta (KINB) and a gamma (KING or SNF4) non-catalytic regulatory subunits. Interacts with KINB2, KINB3, SNF4 and probably with KINB1 and KING1. Interacts with SKP1/ASK1, PAD1, the N-terminus of PRL1 and the WD40 domain of 5PTase13. Potential subunit of a SCF ubiquitin ligase complex consisting of a SNF1-related protein kinase, SKP1 and CUL1. The association of the SCF complex with the proteasome may be mediated by PAD1 and seems to be inhibited by the interaction with PRL1. Interacts with ATAF1. Interacts with ESD4. Interacts with SCE1. Interacts with FUS3. Interacts with PP2C74. Interacts with CDKE1. Interacts with ABI1 and PP2CA. Interacts with KRP6. Interacts with CIPK14. Interacts with FLZ proteins through their FLZ-type zinc finger domains. Interacts with GEBP/STKR1. Interacts with MYC2. Interacts with IDD8. Interacts with BZIP63. Interacts with PTL. Interacts with FLZ3, FLZ9, TCP3, TCP13, HB21/ZHD3 and HB23/ZHD10. Interacts with PTP1. Interacts with RAPTOR1B. Forms oligomers in vitro under strongly reducing conditions. Interacts with WRI1. Interacts with EIN3. Component of a ternary complex composed of BZIP2-BZIP63 heterodimer and KIN10. Interacts with IPK2b. Interacts with FLZ6 and FLZ10. Post-translationally, phosphorylated at Thr-175 in response to glucose. Phosphorylated at Thr-175 under submergence. Autophosphorylated. Dephosphorylated at Thr-175 by ABI1 and PP2CA. In terms of processing, ubiquitinated. Degradation is mediated by a CUL4-based E3 ligase that uses PRL1 as a substrate receptor. Sumoylated by SIZ1. Sumoylated SnRK1 is ubiquitinated and degraded by the proteasome. In terms of tissue distribution, isoform 2 is widely expressed, especially in newly developing tissues. Isoform 2 is expressed throughout the seedling, with highest expression in leaf primordia and vascular tissue, and the seedling root tip. Isoform 2 is later expressed in developing lateral root primordia and developing embryos within siliques. Isoform 1 is widely expressed but at very low levels.

Its subcellular location is the plastid. It localises to the chloroplast. It is found in the cytoplasm. The protein resides in the nucleus. The protein localises to the golgi apparatus. Its subcellular location is the endoplasmic reticulum. It catalyses the reaction L-seryl-[protein] + ATP = O-phospho-L-seryl-[protein] + ADP + H(+). The enzyme catalyses L-threonyl-[protein] + ATP = O-phospho-L-threonyl-[protein] + ADP + H(+). Its activity is regulated as follows. Activated by phosphorylation at Thr-175 by GRIK1/SNAK2 and GRIK2/SNAK1. Inactivated by dephosphorylation at Thr-175. Inhibited by trehalose-6-phosphate. Down-regulated by SR45 by affecting its stability. Reduced kinase activity in response to H(2)O(2) treatment. The redox-state of Cys-177 seems to directly influence its kinase activity. Down-regulated by FLZ6 and FLZ10. Catalytic subunit of the probable trimeric SNF1-related protein kinase (SnRK) complex, a central regulator of cellular energy homeostasis, which, in response to seemingly unrelated darkness, sugar and stress conditions, activates energy-producing pathways and inhibits energy-consuming processes. May play a role in a signal transduction cascade regulating gene expression and carbohydrate metabolism in higher plants. The SnRK complex may also be involved in the regulation of fatty acid synthesis by phosphorylation of acetyl-CoA carboxylase and in assimilation of nitrogen by phosphorylating nitrate reductase. In vitro, KIN10 exhibits kinase activity on sucrose phosphate synthase and the kinase activity is inhibited by PRL1. May be a subunit of a SCF ubiquitin ligase complex and thus be involved in proteasomal ubiquitination. Phosphorylates GRIK1/SNAK2 and GRIK2/SNAK1 in vitro. Cooperates with FUS3 to regulate developmental phase transitions and lateral organ development and act both as positive regulators of abscisic acid (ABA) signaling during germination. Phosphorylates FUS3 in embryo. Negatively modulates MYC2 accumulation through its protein phosphorylation. Phosphorylates geminivirus (CaLCuV, TGMV, ToMoV) AL2 protein resulting in a delay in the viral DNA accumulation and symptom appearance during infection. Regulates bZIP63 activity to alter metabolism in response to starvation through its protein phosphorylation. Under sugar deprivation conditions, antagonizes the IDD8 function in flowering time control by its protein phosphorylation. Plays a cardinal role in the control of cell proliferation through inhibition of KRP6 activity by its protein phosphorylation. Under submergence, phosphorylates PTP1, leading to the release of the MPK6 signaling pathway inhibition. Triggers its own SUMO-mediated proteasomal degradation, establishing a negative feedback loop that attenuates SnRK1 signaling and prevents detrimental hyperactivation of stress responses. Phosphorylates RAPTOR1B in vitro. Phosphorylates and down-regulates HMGR1S in vitro. Kinase activity is redox-sensitive. Acts upstream of TOR in the regulation of autophagy. Required for the activation of autophagy by many abiotic stresses. Involved in positive regulation of autophagy, possibly by affecting the phosphorylation of ATG1 proteins. Negatively modulates WRI1 accumulation through its protein phosphorylation. Modulates leaf senescence progression by the negative regulation of EIN3 accumulation through its protein phosphorylation. Under extended darkness, C/S1-bZIP-SnRK1 complex interacts with the histone acetylation machinery to remodel chromatin and facilitate transcription. BZIP2-BZIP63-KIN10 complex binds to the ETFQO promoter to up-regulate its transcription. Phosphorylates and down-regulates IPK2b in vitro. Involved in the regulation of sucrose-induced hypocotyl elongation under light/dark cycles. The protein is SNF1-related protein kinase catalytic subunit alpha KIN10 of Arabidopsis thaliana (Mouse-ear cress).